The chain runs to 526 residues: Bifunctional purine biosynthesis protein PurH (526 aa).

In terms of domain architecture, MGS-like spans 1 to 147 (MSVIKRALIS…KNWKHVAIVT (147 aa)).

The protein belongs to the PurH family.

It catalyses the reaction (6R)-10-formyltetrahydrofolate + 5-amino-1-(5-phospho-beta-D-ribosyl)imidazole-4-carboxamide = 5-formamido-1-(5-phospho-D-ribosyl)imidazole-4-carboxamide + (6S)-5,6,7,8-tetrahydrofolate. It carries out the reaction IMP + H2O = 5-formamido-1-(5-phospho-D-ribosyl)imidazole-4-carboxamide. It functions in the pathway purine metabolism; IMP biosynthesis via de novo pathway; 5-formamido-1-(5-phospho-D-ribosyl)imidazole-4-carboxamide from 5-amino-1-(5-phospho-D-ribosyl)imidazole-4-carboxamide (10-formyl THF route): step 1/1. It participates in purine metabolism; IMP biosynthesis via de novo pathway; IMP from 5-formamido-1-(5-phospho-D-ribosyl)imidazole-4-carboxamide: step 1/1. The sequence is that of Bifunctional purine biosynthesis protein PurH from Neisseria gonorrhoeae (strain NCCP11945).